The sequence spans 151 residues: Probable desiccation-related protein LEA14 (151 aa).

This sequence belongs to the LEA type 2 family.

This is Probable desiccation-related protein LEA14 (LEA14) from Arabidopsis thaliana (Mouse-ear cress).